The following is a 554-amino-acid chain: Tetratricopeptide repeat protein 34 (554 aa).

TPR repeat units follow at residues 38 to 71, 166 to 199, 200 to 233, 294 to 327, 328 to 361, 411 to 445, 452 to 485, and 500 to 533; these read ETSCLLAADALYRLGRLDDAHKSLLVALSQRPQA, SESLLVRARCYGLLGQKKTAMFDFNAILREEPGN, VKALCGRALVHLALDQLQEAVDDMVSALKLDPGT, PSWRLLLTDILTGLGKYQEAGTHLQEALHLTPSS, EAAQARQGLLQLKKGDVSAAVHGLQCLAERDTQD, NPYHLRLRVACLTQLQEYDRALRDLDRVLQHPAED, SEDFCTRGRLLLSLGDKDGAAGAFTQALALAPAQ, and ASVFLIHGQRCLEEEHFEEAWTAVQNGLLVDPSH.

This chain is Tetratricopeptide repeat protein 34 (Ttc34), found in Mus musculus (Mouse).